Reading from the N-terminus, the 375-residue chain is Growth/differentiation factor 8 (375 aa).

A signal peptide spans 1 to 23; that stretch reads MQKLQIFVYIYLFMLLVAGPVDL. Positions 24 to 266 are excised as a propeptide; sequence NENSEQKENV…VTDTPKRSRR (243 aa). Residues Asn-48 and Asn-71 are each glycosylated (N-linked (GlcNAc...) asparagine). 4 disulfide bridges follow: Cys-272–Cys-282, Cys-281–Cys-340, Cys-309–Cys-372, and Cys-313–Cys-374.

The protein belongs to the TGF-beta family. In terms of assembly, homodimer; disulfide-linked. Interacts with WFIKKN2, leading to inhibit its activity. Interacts with FSTL3. Synthesized as large precursor molecule that undergoes proteolytic cleavage to generate an N-terminal propeptide and a disulfide linked C-terminal dimer, which is the biologically active molecule. The circulating form consists of a latent complex of the C-terminal dimer and other proteins, including its propeptide, which maintain the C-terminal dimer in a latent, inactive state. Ligand activation requires additional cleavage of the prodomain by a tolloid-like metalloproteinase.

The protein localises to the secreted. Functionally, acts specifically as a negative regulator of skeletal muscle growth. The protein is Growth/differentiation factor 8 (MSTN) of Ovis aries (Sheep).